Consider the following 59-residue polypeptide: Dimethylamine corrinoid protein (59 aa).

The 59-residue stretch at 1-59 (TLQGQKDVIELLKEEGLRDKIKVMVGGAPATQAWADKIGADCYAENASEAVAKAKELLA) folds into the B12-binding domain.

The protein belongs to the methylamine corrinoid protein family.

It functions in the pathway one-carbon metabolism; methanogenesis from dimethylamine. Acts as a methyl group carrier between MtbB and MtbA. The polypeptide is Dimethylamine corrinoid protein (mtbC) (Methanosarcina thermophila).